Consider the following 173-residue polypeptide: Crossover junction endodeoxyribonuclease RuvC (173 aa).

Catalysis depends on residues D8, E67, and D139. Mg(2+) contacts are provided by D8, E67, and D139.

The protein belongs to the RuvC family. In terms of assembly, homodimer which binds Holliday junction (HJ) DNA. The HJ becomes 2-fold symmetrical on binding to RuvC with unstacked arms; it has a different conformation from HJ DNA in complex with RuvA. In the full resolvosome a probable DNA-RuvA(4)-RuvB(12)-RuvC(2) complex forms which resolves the HJ. It depends on Mg(2+) as a cofactor.

The protein resides in the cytoplasm. The catalysed reaction is Endonucleolytic cleavage at a junction such as a reciprocal single-stranded crossover between two homologous DNA duplexes (Holliday junction).. Its function is as follows. The RuvA-RuvB-RuvC complex processes Holliday junction (HJ) DNA during genetic recombination and DNA repair. Endonuclease that resolves HJ intermediates. Cleaves cruciform DNA by making single-stranded nicks across the HJ at symmetrical positions within the homologous arms, yielding a 5'-phosphate and a 3'-hydroxyl group; requires a central core of homology in the junction. The consensus cleavage sequence is 5'-(A/T)TT(C/G)-3'. Cleavage occurs on the 3'-side of the TT dinucleotide at the point of strand exchange. HJ branch migration catalyzed by RuvA-RuvB allows RuvC to scan DNA until it finds its consensus sequence, where it cleaves and resolves the cruciform DNA. The sequence is that of Crossover junction endodeoxyribonuclease RuvC from Salmonella agona (strain SL483).